Reading from the N-terminus, the 108-residue chain is UPF0102 protein WS0451 (108 aa).

This sequence belongs to the UPF0102 family.

This chain is UPF0102 protein WS0451, found in Wolinella succinogenes (strain ATCC 29543 / DSM 1740 / CCUG 13145 / JCM 31913 / LMG 7466 / NCTC 11488 / FDC 602W) (Vibrio succinogenes).